Reading from the N-terminus, the 277-residue chain is Putative phosphoenolpyruvate synthase regulatory protein (277 aa).

157–164 contacts ADP; it reads GVSRCGKT.

Belongs to the pyruvate, phosphate/water dikinase regulatory protein family. PSRP subfamily.

The catalysed reaction is [pyruvate, water dikinase] + ADP = [pyruvate, water dikinase]-phosphate + AMP + H(+). It carries out the reaction [pyruvate, water dikinase]-phosphate + phosphate + H(+) = [pyruvate, water dikinase] + diphosphate. Its function is as follows. Bifunctional serine/threonine kinase and phosphorylase involved in the regulation of the phosphoenolpyruvate synthase (PEPS) by catalyzing its phosphorylation/dephosphorylation. This chain is Putative phosphoenolpyruvate synthase regulatory protein, found in Klebsiella pneumoniae (strain 342).